The following is a 334-amino-acid chain: Ornithine carbamoyltransferase (334 aa).

Residues 57–60, arginine 108, and 135–138 contribute to the carbamoyl phosphate site; these read STRT and HPTQ. L-ornithine contacts are provided by residues asparagine 168, aspartate 232, and 236–237; that span reads SM. Carbamoyl phosphate is bound by residues 274–275 and arginine 321; that span reads CL.

Belongs to the aspartate/ornithine carbamoyltransferase superfamily. OTCase family.

Its subcellular location is the cytoplasm. The catalysed reaction is carbamoyl phosphate + L-ornithine = L-citrulline + phosphate + H(+). It functions in the pathway amino-acid biosynthesis; L-arginine biosynthesis; L-arginine from L-ornithine and carbamoyl phosphate: step 1/3. Functionally, reversibly catalyzes the transfer of the carbamoyl group from carbamoyl phosphate (CP) to the N(epsilon) atom of ornithine (ORN) to produce L-citrulline. The chain is Ornithine carbamoyltransferase from Cutibacterium acnes (strain DSM 16379 / KPA171202) (Propionibacterium acnes).